The primary structure comprises 1358 residues: DNA-directed RNA polymerase subunit beta (1358 aa).

The protein belongs to the RNA polymerase beta chain family. In terms of assembly, the RNAP catalytic core consists of 2 alpha, 1 beta, 1 beta' and 1 omega subunit. When a sigma factor is associated with the core the holoenzyme is formed, which can initiate transcription.

The enzyme catalyses RNA(n) + a ribonucleoside 5'-triphosphate = RNA(n+1) + diphosphate. Functionally, DNA-dependent RNA polymerase catalyzes the transcription of DNA into RNA using the four ribonucleoside triphosphates as substrates. The chain is DNA-directed RNA polymerase subunit beta from Chromohalobacter salexigens (strain ATCC BAA-138 / DSM 3043 / CIP 106854 / NCIMB 13768 / 1H11).